The chain runs to 429 residues: Adenosylmethionine-8-amino-7-oxononanoate aminotransferase (429 aa).

Residue Trp52 coordinates substrate. Residue 112–113 (GS) coordinates pyridoxal 5'-phosphate. Position 144 (Tyr144) interacts with substrate. Asp245 lines the pyridoxal 5'-phosphate pocket. The substrate site is built by Lys274 and Gly307. An N6-(pyridoxal phosphate)lysine modification is found at Lys274. A pyridoxal 5'-phosphate-binding site is contributed by 308 to 309 (PT). A substrate-binding site is contributed by Arg391.

Belongs to the class-III pyridoxal-phosphate-dependent aminotransferase family. BioA subfamily. In terms of assembly, homodimer. Requires pyridoxal 5'-phosphate as cofactor.

It is found in the cytoplasm. The catalysed reaction is (8S)-8-amino-7-oxononanoate + S-adenosyl-L-methionine = S-adenosyl-4-methylsulfanyl-2-oxobutanoate + (7R,8S)-7,8-diammoniononanoate. It participates in cofactor biosynthesis; biotin biosynthesis; 7,8-diaminononanoate from 8-amino-7-oxononanoate (SAM route): step 1/1. Its function is as follows. Catalyzes the transfer of the alpha-amino group from S-adenosyl-L-methionine (SAM) to 7-keto-8-aminopelargonic acid (KAPA) to form 7,8-diaminopelargonic acid (DAPA). It is the only aminotransferase known to utilize SAM as an amino donor. This chain is Adenosylmethionine-8-amino-7-oxononanoate aminotransferase, found in Buchnera aphidicola subsp. Baizongia pistaciae (strain Bp).